Consider the following 447-residue polypeptide: ATP-dependent protease ATPase subunit HslU (447 aa).

ATP-binding positions include Ile18, Gly60–Glu65, Asp259, Glu325, and Arg397.

This sequence belongs to the ClpX chaperone family. HslU subfamily. A double ring-shaped homohexamer of HslV is capped on each side by a ring-shaped HslU homohexamer. The assembly of the HslU/HslV complex is dependent on binding of ATP.

It is found in the cytoplasm. In terms of biological role, ATPase subunit of a proteasome-like degradation complex; this subunit has chaperone activity. The binding of ATP and its subsequent hydrolysis by HslU are essential for unfolding of protein substrates subsequently hydrolyzed by HslV. HslU recognizes the N-terminal part of its protein substrates and unfolds these before they are guided to HslV for hydrolysis. The chain is ATP-dependent protease ATPase subunit HslU from Burkholderia cenocepacia (strain HI2424).